The following is a 718-amino-acid chain: SANT and BTB domain regulator of class switch recombination (718 aa).

The SANT domain occupies 21 to 59 (DMILYPLIGIPQTINWETIARLVPGLTPKECAKRFDELK). Positions 118–134 (ASTRNCSSESENCTTHN) are enriched in polar residues. Residues 118–142 (ASTRNCSSESENCTTHNGGEMTEES) form a disordered region. In terms of domain architecture, BTB spans 147-255 (MVIHVCDEAK…QCIQYCHKNM (109 aa)). Residues 555 to 576 (SEEEEYTTGSEVTEDEVGDEEE) show a composition bias toward acidic residues. Disordered regions lie at residues 555–622 (SEEE…SPFV) and 692–718 (SVPV…GRPA). Basic residues predominate over residues 580–595 (KQRKKEKPKKFTRQPK). Positions 604-615 (QRKEKALEKSAS) are enriched in basic and acidic residues.

Belongs to the KIAA1841 family. As to quaternary structure, homodimer. Interacts (via the BTB domain) with HDAC1 and NCOR2.

In terms of biological role, negatively regulates class switch recombination or isotype switching in splenic B-cells. The protein is SANT and BTB domain regulator of class switch recombination of Homo sapiens (Human).